We begin with the raw amino-acid sequence, 334 residues long: Ornithine carbamoyltransferase, catabolic (334 aa).

Residues 57-60 (STRT), Gln-84, Arg-108, and 135-138 (HPTQ) each bind carbamoyl phosphate. L-ornithine contacts are provided by residues Asn-168, Asp-232, and 236-237 (SM). Residues 274–275 (CL) and Arg-320 each bind carbamoyl phosphate.

This sequence belongs to the aspartate/ornithine carbamoyltransferase superfamily. OTCase family.

Its subcellular location is the cytoplasm. The enzyme catalyses carbamoyl phosphate + L-ornithine = L-citrulline + phosphate + H(+). It functions in the pathway amino-acid degradation; L-arginine degradation via ADI pathway; carbamoyl phosphate from L-arginine: step 2/2. Functionally, reversibly catalyzes the transfer of the carbamoyl group from carbamoyl phosphate (CP) to the N(epsilon) atom of ornithine (ORN) to produce L-citrulline. In Rhizobium meliloti (strain 1021) (Ensifer meliloti), this protein is Ornithine carbamoyltransferase, catabolic (arcB).